The chain runs to 161 residues: Nucleotide-binding protein PputW619_0959 (161 aa).

Belongs to the YajQ family.

Nucleotide-binding protein. This is Nucleotide-binding protein PputW619_0959 from Pseudomonas putida (strain W619).